The chain runs to 188 residues: Protein SSX1 (188 aa).

Disordered stretches follow at residues 1-22 (MNGDDTFAKRPRDDAKASEKRS) and 111-188 (IMPK…EDDE). One can recognise a KRAB-related domain in the interval 20-83 (KRSKAFDDIA…KQATDFQGND (64 aa)). Over residues 115–125 (KPAEDENDSKG) the composition is skewed to basic and acidic residues. Position 123 is a phosphoserine (S123). Residues 153 to 170 (KRSGPKRGKHAWTHRLRE) show a composition bias toward basic residues. Residues 179 to 188 (EISDPEEDDE) show a composition bias toward acidic residues.

This sequence belongs to the SSX family. Expressed at high level in the testis. Expressed at low level in thyroid. Not detected in tonsil, colon, lung, spleen, prostate, kidney, striated and smooth muscles. Detected in rhabdomyosarcoma and fibrosarcoma cell lines. Not detected in mesenchymal and epithelial cell lines. Expressed in testis.

It is found in the cytoplasm. Its subcellular location is the cytoskeleton. The protein resides in the flagellum axoneme. In terms of biological role, could act as a modulator of transcription. Plays a role in spermatogenesis. This chain is Protein SSX1 (SSX1), found in Homo sapiens (Human).